Consider the following 256-residue polypeptide: Nuclear shuttle protein (256 aa).

The interval 18-50 (VSRNQSSKRGTFVRRTDGKRRKGPSSKAHDEPK) is disordered. Positions 21–42 (NQSSKRGTFVRRTDGKRRKGPS) match the Bipartite nuclear localization signal motif. The short motif at 81 to 96 (VLGKIEPNRSRSYIKL) is the Nuclear localization signal element. Residues 150 to 187 (EIFGARIHSHGNLAITPGLKDRYYVLHVLKRVLSVEKD) are interaction with Arabidopsis thaliana NSI protein.

Belongs to the begomovirus nuclear shuttle protein family. Binds to single-stranded and double-stranded viral DNA. Interacts with the host nuclear shuttle interacting (NSI) protein. This interaction may allow NSP to recruit NSI monomers to the viral genome and thus regulate nuclear export of viral genome by NSP.

The protein localises to the host nucleus. It is found in the host cytoplasm. Its subcellular location is the host cell membrane. Functionally, binds to the genomic viral ssDNA, shuttles it into and out of the cell nucleus. Begomoviruses use 2 proteins to transport their DNA from cell to cell. The nuclear shuttle protein (NSP) shuttles it between nucleus and cytoplasm and the movement protein (MP) probably transports the DNA-NSP complex to the cell periphery and facilitates movement across the cell wall. The polypeptide is Nuclear shuttle protein (Brassica oleracea (Wild cabbage)).